The primary structure comprises 224 residues: Envelope glycoprotein L (224 aa).

Residues 1–16 (MGFVCLFGLVVMGAWG) form the signal peptide. Positions 20–161 (GSQATEYVLR…FDYSRTRRCV (142 aa)) are interaction with gH. The 179-residue stretch at 23 to 201 (ATEYVLRSVI…LATQPPVLAL (179 aa)) folds into the gL alphaherpesvirus-type domain. 2 cysteine pairs are disulfide-bonded: C44/C76 and C149/C160. A disordered region spans residues 168–224 (PANTTSTWEPPVSSDDEASSQSKPLATQPPVLALSNAPPRRVSPTRGRRRHTRLRRN). Positions 213 to 224 (RGRRRHTRLRRN) are enriched in basic residues.

This sequence belongs to the herpesviridae glycoprotein L (gL) family. Alphaherpesvirinae gL subfamily. In terms of assembly, interacts with glycoprotein H (gH); this interaction is necessary for the correct processing and cell surface expression of gH. The heterodimer gH/gL seems to interact with gB trimers during fusion.

The protein resides in the virion membrane. The protein localises to the host cell membrane. It is found in the host Golgi apparatus. It localises to the host trans-Golgi network. In terms of biological role, the heterodimer glycoprotein H-glycoprotein L is required for the fusion of viral and plasma membranes leading to virus entry into the host cell. Acts as a functional inhibitor of gH and maintains gH in an inhibited form. Upon binding to host integrins, gL dissociates from gH leading to activation of the viral fusion glycoproteins gB and gH. This is Envelope glycoprotein L from Homo sapiens (Human).